Here is a 358-residue protein sequence, read N- to C-terminus: Psilocybin cluster transcription regulator (358 aa).

Disordered regions lie at residues 1–40 and 62–212; these read MAPA…IAGM and SGGK…RRRR. Residues 18 to 29 are compositionally biased toward pro residues; that stretch reads PPAPGAPAPANA. Over residues 79 to 91 the composition is skewed to polar residues; the sequence is QTLSNLAQAQPYG. The span at 179–190 shows a compositional bias: low complexity; it reads PTTGRRGGRSAT. Positions 195–209 are enriched in basic and acidic residues; the sequence is EWSRQRKDNHKEVER. A basic motif region spans residues 199 to 212; it reads QRKDNHKEVERRRR. A bHLH domain is found at 199–249; sequence QRKDNHKEVERRRRGNINEGINELGRIVPSGSGEKAKGAILSRAVQYIHHL. Positions 213 to 249 are helix-loop-helix motif; sequence GNINEGINELGRIVPSGSGEKAKGAILSRAVQYIHHL. The stretch at 264-306 forms a coiled coil; that stretch reads KLLMDQAMGDLQAQLEEVKRLWEEERMARTRLEAELEVLRNMN. Residues 308–358 form a disordered region; the sequence is VNAGSAPASKDESAAGTKRRSTDGAEAATAATESSTANAEGERDGKRQRTE. Residues 331-346 show a composition bias toward low complexity; it reads GAEAATAATESSTANA. A compositionally biased stretch (basic and acidic residues) spans 347–358; that stretch reads EGERDGKRQRTE.

It localises to the nucleus. In terms of biological role, transcription factor that may regulate the expression of the gene cluster that mediates the biosynthesis of psilocybin, a psychotropic tryptamine-derived natural product. The sequence is that of Psilocybin cluster transcription regulator from Psilocybe cubensis (Psychedelic mushroom).